The primary structure comprises 151 residues: Minor curlin subunit (151 aa).

A signal peptide spans 1 to 21 (MKNKLLFMMLTILGAPGIATA).

The protein belongs to the CsgA/CsgB family.

Its subcellular location is the fimbrium. In terms of biological role, curlin is the structural subunit of the curli. Curli are coiled surface structures that assemble preferentially at growth temperatures below 37 degrees Celsius. Curli can bind to fibronectin. The minor subunit is the nucleation component of curlin monomers. The sequence is that of Minor curlin subunit (csgB) from Salmonella typhi.